A 136-amino-acid polypeptide reads, in one-letter code: uncharacterized protein (136 aa).

The segment at 1–51 (MAANATSGRPPSIALRQPEATGWRRGIPAKVATKGTQAEREGDVRSGGRAR) is disordered. Basic and acidic residues predominate over residues 37–46 (QAEREGDVRS).

This is an uncharacterized protein from Homo sapiens (Human).